Reading from the N-terminus, the 249-residue chain is 3-deoxy-manno-octulosonate cytidylyltransferase (249 aa).

The protein belongs to the KdsB family.

It localises to the cytoplasm. The enzyme catalyses 3-deoxy-alpha-D-manno-oct-2-ulosonate + CTP = CMP-3-deoxy-beta-D-manno-octulosonate + diphosphate. It functions in the pathway nucleotide-sugar biosynthesis; CMP-3-deoxy-D-manno-octulosonate biosynthesis; CMP-3-deoxy-D-manno-octulosonate from 3-deoxy-D-manno-octulosonate and CTP: step 1/1. The protein operates within bacterial outer membrane biogenesis; lipopolysaccharide biosynthesis. Its function is as follows. Activates KDO (a required 8-carbon sugar) for incorporation into bacterial lipopolysaccharide in Gram-negative bacteria. In Coxiella burnetii (strain CbuG_Q212) (Coxiella burnetii (strain Q212)), this protein is 3-deoxy-manno-octulosonate cytidylyltransferase.